The sequence spans 1349 residues: Protein strawberry notch homolog 2 (1349 aa).

Disordered stretches follow at residues 170 to 212 (YQSH…QHPD), 609 to 633 (STRR…PKAS), and 1319 to 1349 (PTET…FPNS). The segment covering 177 to 188 (EEEEGEEEEETE) has biased composition (acidic residues). Positions 609 to 631 (STRRRRDRGGGKRKRRPRGRGPK) are enriched in basic residues.

Belongs to the SBNO family. Interacts with TAL1; this interaction inhibits TAL1 occupancy of the DCSTAMP promoter, leading to the activation of the DCSTAMP promoter by the transcription factor MITF. Expressed in the spleen and bone marrow, and to a lesser extent in the kidney, liver, brain, skin, heart and muscle. Expressed predominantly in osteoclasts, and to a lesser extent in T-cells, B-cells and osteoblasts. Expressed in macrophages.

In terms of biological role, acts as a transcriptional coregulator, that can have both coactivator and corepressor functions. Inhibits the DCSTAMP-repressive activity of TAL1, hence enhancing the access of the transcription factor MITF to the DC-STAMP promoter in osteoclast. Plays a role in bone homeostasis; required as a positive regulator in TNFSF11//RANKL-mediated osteoclast fusion via a DCSTAMP-dependent pathway. May also be required in the regulation of osteoblast differentiation. Involved in the transcriptional corepression of NF-kappaB in macrophages. Plays a role as a regulator in the pro-inflammatory cascade. The protein is Protein strawberry notch homolog 2 (Sbno2) of Mus musculus (Mouse).